A 371-amino-acid polypeptide reads, in one-letter code: MNKAPHETRVVVGMSGGVDSSVAALLLKEQGYDVIGIFMKNWDDTDENGVCTATEDYEDVVRVCNQIGIPYYAVNFEKQYWDKVFTYFLNEYKAGRTPNPDVMCNKEIKFKAFLEHAMSIGADYVATGHYARVEFRDGEYKMLRGADPNKDQTYFLNQLGQAQLSKVMFPIGHLQKADVRRIAKEAGLATAGKKDSTGICFIGERDFKEFLSHYLPAQPGVMKTLDGEVKGRHDGVMYYTIGQRHGLGIGGSGEPWFVVGKDVRENVLYVAQGFENEYLYSTSLKAVDVNWVSDRKPEAPFRCTAKFRYRQPDIGVMVHPLADGKAEVVFDAPARAVTPGQAVVFYNGDECLGGGTIDEVFRNGEKLWYVG.

ATP-binding positions include 13-20 (GMSGGVDS) and Met-39. The interaction with target base in tRNA stretch occupies residues 99 to 101 (NPD). The active-site Nucleophile is the Cys-104. Cys-104 and Cys-200 are disulfide-bonded. Position 128 (Gly-128) interacts with ATP. An interaction with tRNA region spans residues 150–152 (KDQ). Catalysis depends on Cys-200, which acts as the Cysteine persulfide intermediate. The interval 308–309 (RY) is interaction with tRNA.

It belongs to the MnmA/TRMU family.

It is found in the cytoplasm. It carries out the reaction S-sulfanyl-L-cysteinyl-[protein] + uridine(34) in tRNA + AH2 + ATP = 2-thiouridine(34) in tRNA + L-cysteinyl-[protein] + A + AMP + diphosphate + H(+). Functionally, catalyzes the 2-thiolation of uridine at the wobble position (U34) of tRNA, leading to the formation of s(2)U34. The polypeptide is tRNA-specific 2-thiouridylase MnmA (Geobacillus thermodenitrificans (strain NG80-2)).